A 170-amino-acid chain; its full sequence is Adenine phosphoribosyltransferase (170 aa).

The protein belongs to the purine/pyrimidine phosphoribosyltransferase family. Homodimer.

Its subcellular location is the cytoplasm. The catalysed reaction is AMP + diphosphate = 5-phospho-alpha-D-ribose 1-diphosphate + adenine. The protein operates within purine metabolism; AMP biosynthesis via salvage pathway; AMP from adenine: step 1/1. In terms of biological role, catalyzes a salvage reaction resulting in the formation of AMP, that is energically less costly than de novo synthesis. In Prochlorococcus marinus (strain MIT 9312), this protein is Adenine phosphoribosyltransferase.